A 332-amino-acid chain; its full sequence is 3-dehydroquinate synthase (332 aa).

Residues 55 to 60, 89 to 93, 113 to 114, lysine 126, lysine 134, and 152 to 155 contribute to the NAD(+) site; these read DGEEYK, GVITD, TT, and TLST. 3 residues coordinate Zn(2+): glutamate 167, histidine 226, and histidine 242.

The protein belongs to the sugar phosphate cyclases superfamily. Dehydroquinate synthase family. NAD(+) is required as a cofactor. It depends on Co(2+) as a cofactor. Requires Zn(2+) as cofactor.

The protein resides in the cytoplasm. It carries out the reaction 7-phospho-2-dehydro-3-deoxy-D-arabino-heptonate = 3-dehydroquinate + phosphate. It functions in the pathway metabolic intermediate biosynthesis; chorismate biosynthesis; chorismate from D-erythrose 4-phosphate and phosphoenolpyruvate: step 2/7. Its function is as follows. Catalyzes the conversion of 3-deoxy-D-arabino-heptulosonate 7-phosphate (DAHP) to dehydroquinate (DHQ). The protein is 3-dehydroquinate synthase of Pyrococcus abyssi (strain GE5 / Orsay).